Here is an 883-residue protein sequence, read N- to C-terminus: Phosphoenolpyruvate carboxylase (883 aa).

Catalysis depends on residues His138 and Lys546.

It belongs to the PEPCase type 1 family. In terms of assembly, homotetramer. Mg(2+) is required as a cofactor.

It carries out the reaction oxaloacetate + phosphate = phosphoenolpyruvate + hydrogencarbonate. The enzyme has distinct binding sites for each of the allosteric effectors such as acetyl-CoA, fructose 1,6-bisphosphate, guanosine 3'-diphosphate 5'-diphosphate, long chain fatty acids, and L-aspartate. Functionally, forms oxaloacetate, a four-carbon dicarboxylic acid source for the tricarboxylic acid cycle. This is Phosphoenolpyruvate carboxylase (ppc) from Salmonella typhi.